The following is a 722-amino-acid chain: Nucleolar protein 10 (722 aa).

WD repeat units follow at residues 50-90, 174-213, 228-266, 270-308, and 310-349; these read EMPT…LKFE, TDAA…RVAA, EGLP…PLLV, YYGL…VFSS, and EPQA…PAPR. 2 coiled-coil regions span residues 423-476 and 511-534; these read EYRK…ANVA and SNVA…EEQE. Disordered stretches follow at residues 521–555, 572–607, 616–635, and 664–722; these read LLEE…GWVQ, SYIQ…PRFY, RSFS…LEER, and TEKQ…RRPF. Acidic residues predominate over residues 523–534; the sequence is EEEQEQAEEEQE. The segment covering 572 to 586 has biased composition (basic and acidic residues); that stretch reads SYIQRQERRQQDRNT. Over residues 587-600 the composition is skewed to polar residues; that stretch reads RLQSSDTHTQQSHG. The stretch at 620–681 forms a coiled coil; it reads DVSRKQKTHK…QAERDHHEER (62 aa). Over residues 664 to 682 the composition is skewed to basic and acidic residues; the sequence is TEKQRFQQQAERDHHEERR. Composition is skewed to basic residues over residues 683-693 and 702-722; these read RIRRSAGHLHS and GGGR…RRPF.

The protein belongs to the WD repeat NOL10/ENP2 family.

It is found in the nucleus. It localises to the nucleolus. The sequence is that of Nucleolar protein 10 (nol10) from Danio rerio (Zebrafish).